The sequence spans 89 residues: uncharacterized protein (89 aa).

It to Rhizobium NGR234A y4oN.

This is an uncharacterized protein from Sinorhizobium fredii (strain NBRC 101917 / NGR234).